Here is a 157-residue protein sequence, read N- to C-terminus: Small ribosomal subunit protein uS7 (157 aa).

It belongs to the universal ribosomal protein uS7 family. As to quaternary structure, part of the 30S ribosomal subunit. Contacts proteins S9 and S11.

Functionally, one of the primary rRNA binding proteins, it binds directly to 16S rRNA where it nucleates assembly of the head domain of the 30S subunit. Is located at the subunit interface close to the decoding center, probably blocks exit of the E-site tRNA. This Chlamydia abortus (strain DSM 27085 / S26/3) (Chlamydophila abortus) protein is Small ribosomal subunit protein uS7.